Reading from the N-terminus, the 432-residue chain is N-acylneuraminate cytidylyltransferase (432 aa).

Substrate is bound by residues Arg39, Asn49, Arg98, Ser107, Ser109, and Gln130. Arg188 is a catalytic residue.

The protein belongs to the CMP-NeuNAc synthase family. Homotetramer; the active enzyme is formed by a dimer of dimers. In terms of tissue distribution, expressed in testis, ovary and liver.

The protein localises to the nucleus. The catalysed reaction is an N-acylneuraminate + CTP = a CMP-N-acyl-beta-neuraminate + diphosphate. It participates in amino-sugar metabolism; N-acetylneuraminate metabolism. Catalyzes the activation of N-acetylneuraminic acid (NeuNAc) to cytidine 5'-monophosphate N-acetylneuraminic acid (CMP-NeuNAc), a substrate required for the addition of sialic acid. The polypeptide is N-acylneuraminate cytidylyltransferase (cmas) (Oncorhynchus mykiss (Rainbow trout)).